The primary structure comprises 236 residues: Small ribosomal subunit protein uS3 (236 aa).

The KH type-2 domain maps to 39-107 (IRKFLKREMY…EVFINIKEAK (69 aa)). Residues 214–229 (PEKKEESKSGDKEVRS) are compositionally biased toward basic and acidic residues. Residues 214-236 (PEKKEESKSGDKEVRSKSRRGRQ) are disordered.

This sequence belongs to the universal ribosomal protein uS3 family. Part of the 30S ribosomal subunit. Forms a tight complex with proteins S10 and S14.

In terms of biological role, binds the lower part of the 30S subunit head. Binds mRNA in the 70S ribosome, positioning it for translation. This Helicobacter hepaticus (strain ATCC 51449 / 3B1) protein is Small ribosomal subunit protein uS3.